We begin with the raw amino-acid sequence, 192 residues long: Molybdenum cofactor cytidylyltransferase (192 aa).

Asp-101 is a binding site for Mg(2+).

In terms of assembly, monomer. Interacts with the Moco-binding chaperone PaoD. The cofactor is Mg(2+). Mn(2+) serves as cofactor.

It catalyses the reaction Mo-molybdopterin + CTP + H(+) = Mo-molybdopterin cytosine dinucleotide + diphosphate. Transfers a CMP moiety from CTP to Mo-molybdopterin (Mo-MPT) cofactor (Moco or molybdenum cofactor) to form Mo-molybdopterin cytosine dinucleotide (Mo-MCD) cofactor. Is specific for CTP; other nucleotides such as ATP and GTP cannot be utilized. Is also able to convert MPT to MCD in the absence of molybdate, however, with only one catalytic turnover. This is Molybdenum cofactor cytidylyltransferase (mocA) from Escherichia coli (strain K12).